A 99-amino-acid polypeptide reads, in one-letter code: Evasin P1162 (99 aa).

The signal sequence occupies residues 1-28 (MEVKTFAFLQIAVCIAIGIELICAGTNA). 3 disulfide bridges follow: cysteine 40–cysteine 59, cysteine 44–cysteine 61, and cysteine 55–cysteine 72. N-linked (GlcNAc...) asparagine glycosylation is found at asparagine 43, asparagine 49, asparagine 58, and asparagine 85.

The protein resides in the secreted. Salivary chemokine-binding protein which binds to host chemokines CXCL1, CXCL2, CXCL3, CXCL5 and CXCL8. This chain is Evasin P1162, found in Ixodes ricinus (Common tick).